Consider the following 1101-residue polypeptide: Error-prone DNA polymerase (1101 aa).

The tract at residues 1055–1101 is disordered; that stretch reads ADLGHPMDSAVGQTTPQTDSAPRPRPQPRAMHPREQAKRLFPSRDFH. Over residues 1065–1074 the composition is skewed to polar residues; that stretch reads VGQTTPQTDS. Residues 1086–1101 show a composition bias toward basic and acidic residues; it reads HPREQAKRLFPSRDFH.

It belongs to the DNA polymerase type-C family. DnaE2 subfamily.

Its subcellular location is the cytoplasm. The catalysed reaction is DNA(n) + a 2'-deoxyribonucleoside 5'-triphosphate = DNA(n+1) + diphosphate. Functionally, DNA polymerase involved in damage-induced mutagenesis and translesion synthesis (TLS). It is not the major replicative DNA polymerase. The sequence is that of Error-prone DNA polymerase from Ruegeria pomeroyi (strain ATCC 700808 / DSM 15171 / DSS-3) (Silicibacter pomeroyi).